We begin with the raw amino-acid sequence, 1044 residues long: Carbamoyl phosphate synthase large chain (1044 aa).

A carboxyphosphate synthetic domain region spans residues Met-1–Asp-398. 12 residues coordinate ATP: Arg-129, Arg-169, Gly-175, Gly-176, Arg-208, Leu-210, Glu-215, Gly-241, Val-242, His-243, Gln-284, and Glu-296. One can recognise an ATP-grasp 1 domain in the interval His-133–Val-325. Mg(2+) is bound by residues Gln-284, Glu-296, and Asn-298. The Mn(2+) site is built by Gln-284, Glu-296, and Asn-298. Residues Ile-399 to Leu-539 are oligomerization domain. Residues Pro-540–Ile-916 form a carbamoyl phosphate synthetic domain region. The 190-residue stretch at Ser-665 to Met-854 folds into the ATP-grasp 2 domain. Arg-701, Lys-738, Leu-740, Glu-745, Gly-770, Val-771, His-772, Ser-773, Gln-813, and Glu-825 together coordinate ATP. 3 residues coordinate Mg(2+): Gln-813, Glu-825, and Asn-827. The Mn(2+) site is built by Gln-813, Glu-825, and Asn-827. The MGS-like domain occupies Ser-911–His-1044. The tract at residues Ile-916 to His-1044 is allosteric domain.

The protein belongs to the CarB family. As to quaternary structure, composed of two chains; the small (or glutamine) chain promotes the hydrolysis of glutamine to ammonia, which is used by the large (or ammonia) chain to synthesize carbamoyl phosphate. Tetramer of heterodimers (alpha,beta)4. It depends on Mg(2+) as a cofactor. Mn(2+) is required as a cofactor.

It catalyses the reaction hydrogencarbonate + L-glutamine + 2 ATP + H2O = carbamoyl phosphate + L-glutamate + 2 ADP + phosphate + 2 H(+). The catalysed reaction is hydrogencarbonate + NH4(+) + 2 ATP = carbamoyl phosphate + 2 ADP + phosphate + 2 H(+). The protein operates within amino-acid biosynthesis; L-arginine biosynthesis; carbamoyl phosphate from bicarbonate: step 1/1. It functions in the pathway pyrimidine metabolism; UMP biosynthesis via de novo pathway; (S)-dihydroorotate from bicarbonate: step 1/3. Its function is as follows. Large subunit of the glutamine-dependent carbamoyl phosphate synthetase (CPSase). CPSase catalyzes the formation of carbamoyl phosphate from the ammonia moiety of glutamine, carbonate, and phosphate donated by ATP, constituting the first step of 2 biosynthetic pathways, one leading to arginine and/or urea and the other to pyrimidine nucleotides. The large subunit (synthetase) binds the substrates ammonia (free or transferred from glutamine from the small subunit), hydrogencarbonate and ATP and carries out an ATP-coupled ligase reaction, activating hydrogencarbonate by forming carboxy phosphate which reacts with ammonia to form carbamoyl phosphate. The sequence is that of Carbamoyl phosphate synthase large chain from Thermoplasma volcanium (strain ATCC 51530 / DSM 4299 / JCM 9571 / NBRC 15438 / GSS1).